Here is a 159-residue protein sequence, read N- to C-terminus: Large ribosomal subunit protein bL17 (159 aa).

The span at 124–135 shows a compositional bias: low complexity; sequence EANRATRAAASK. Positions 124–159 are disordered; that stretch reads EANRATRAAASKQAEEAKAEEAEATEAEAEETTEEK. Residues 145–159 show a composition bias toward acidic residues; sequence AEATEAEAEETTEEK.

The protein belongs to the bacterial ribosomal protein bL17 family. As to quaternary structure, part of the 50S ribosomal subunit. Contacts protein L32.

This chain is Large ribosomal subunit protein bL17, found in Corynebacterium aurimucosum (strain ATCC 700975 / DSM 44827 / CIP 107346 / CN-1) (Corynebacterium nigricans).